The primary structure comprises 185 residues: Transcription termination/antitermination protein NusG (185 aa).

Residues 134–164 (VGKRVRIVDGAFSGFEAPITEINGDKLTLTV) form the KOW domain.

This sequence belongs to the NusG family.

Its function is as follows. Participates in transcription elongation, termination and antitermination. The sequence is that of Transcription termination/antitermination protein NusG from Lactococcus lactis subsp. lactis (strain IL1403) (Streptococcus lactis).